Consider the following 476-residue polypeptide: Aspartyl/glutamyl-tRNA(Asn/Gln) amidotransferase subunit B (476 aa).

It belongs to the GatB/GatE family. GatB subfamily. In terms of assembly, heterotrimer of A, B and C subunits.

It catalyses the reaction L-glutamyl-tRNA(Gln) + L-glutamine + ATP + H2O = L-glutaminyl-tRNA(Gln) + L-glutamate + ADP + phosphate + H(+). It carries out the reaction L-aspartyl-tRNA(Asn) + L-glutamine + ATP + H2O = L-asparaginyl-tRNA(Asn) + L-glutamate + ADP + phosphate + 2 H(+). In terms of biological role, allows the formation of correctly charged Asn-tRNA(Asn) or Gln-tRNA(Gln) through the transamidation of misacylated Asp-tRNA(Asn) or Glu-tRNA(Gln) in organisms which lack either or both of asparaginyl-tRNA or glutaminyl-tRNA synthetases. The reaction takes place in the presence of glutamine and ATP through an activated phospho-Asp-tRNA(Asn) or phospho-Glu-tRNA(Gln). The protein is Aspartyl/glutamyl-tRNA(Asn/Gln) amidotransferase subunit B of Lactobacillus acidophilus (strain ATCC 700396 / NCK56 / N2 / NCFM).